We begin with the raw amino-acid sequence, 353 residues long: Inositol 3-kinase (353 aa).

ATP is bound by residues S197, 247–250, and N274; that span reads GAGD. D250 functions as the Proton acceptor in the catalytic mechanism.

This sequence belongs to the carbohydrate kinase pfkB family.

The catalysed reaction is myo-inositol + ATP = 1D-myo-inositol 3-phosphate + ADP + H(+). In terms of biological role, kinase that phosphorylates myo-inositol to produce multiple myo-inositol monophosphates. Participates in phytic acid biosynthesis in developing seeds. Phytic acid is the primary storage form of phosphorus in cereal grains and other plant seeds. The protein is Inositol 3-kinase of Arabidopsis thaliana (Mouse-ear cress).